The sequence spans 314 residues: 1D-myo-inositol 2-acetamido-2-deoxy-alpha-D-glucopyranoside deacetylase 2 (314 aa).

The Zn(2+) site is built by H25, D28, and H161.

It belongs to the MshB deacetylase family. Requires Zn(2+) as cofactor.

It catalyses the reaction 1D-myo-inositol 2-acetamido-2-deoxy-alpha-D-glucopyranoside + H2O = 1D-myo-inositol 2-amino-2-deoxy-alpha-D-glucopyranoside + acetate. Catalyzes the deacetylation of 1D-myo-inositol 2-acetamido-2-deoxy-alpha-D-glucopyranoside (GlcNAc-Ins) in the mycothiol biosynthesis pathway. This chain is 1D-myo-inositol 2-acetamido-2-deoxy-alpha-D-glucopyranoside deacetylase 2, found in Frankia casuarinae (strain DSM 45818 / CECT 9043 / HFP020203 / CcI3).